The chain runs to 187 residues: MKITGVEIRPGNIIEFEGGIWKVTKIQHTQPGKGGAYMQVEAKNLIDGRKLNNRFRSADTVEKVRLDTKDFQYLYAEGDDLVFMDKDTYEQITIGKDVVGEAHEFLQDGMDVVLELWEERPISVELPEQIEATIVEADAVVKGQTASSSYKPAILDNGVRVMVPPHITSGTRIVVNVYDREYVRRAD.

The protein belongs to the elongation factor P family.

It is found in the cytoplasm. It functions in the pathway protein biosynthesis; polypeptide chain elongation. Involved in peptide bond synthesis. Stimulates efficient translation and peptide-bond synthesis on native or reconstituted 70S ribosomes in vitro. Probably functions indirectly by altering the affinity of the ribosome for aminoacyl-tRNA, thus increasing their reactivity as acceptors for peptidyl transferase. This chain is Elongation factor P, found in Sphingopyxis alaskensis (strain DSM 13593 / LMG 18877 / RB2256) (Sphingomonas alaskensis).